The following is a 224-amino-acid chain: Non-structural protein V (224 aa).

Residues Q54–Q65 show a composition bias toward polar residues. 2 disordered regions span residues Q54–P94 and T150–R172. Residues H170, C189, C193, C205, C207, C210, C214, and C217 each coordinate Zn(2+).

This sequence belongs to the paramyxoviruses V protein family. Interacts with host IFIH1/MDA5 and DHX58/LGP2. Forms with host DDB1, CUL4A, STAT1, STAT2 and STAT3 the mumps virus V-dependent complex (VDC).

The protein localises to the virion. It is found in the host cytoplasm. In terms of biological role, plays an essential role in the inhibition of host immune response. Prevents the establishment of cellular antiviral state by blocking interferon-alpha/beta (IFN-alpha/beta) production and signaling pathway. Interacts with host IFIH1/MDA5 and DHX58/LGP2 to inhibit the transduction pathway involved in the activation of IFN-beta promoter, thus protecting the virus against cell antiviral state. Blocks the type I and II interferon signaling pathways by interacting with host STAT1, STAT2 and STAT3, and mediating their ubiquitination and subsequent proteasomal degradation. The protein is Non-structural protein V of Homo sapiens (Human).